A 287-amino-acid polypeptide reads, in one-letter code: Ribosomal RNA small subunit methyltransferase A (287 aa).

S-adenosyl-L-methionine-binding residues include Asn-28, Leu-30, Gly-55, Glu-76, Asp-101, and Asn-125.

The protein belongs to the class I-like SAM-binding methyltransferase superfamily. rRNA adenine N(6)-methyltransferase family. RsmA subfamily.

The protein localises to the cytoplasm. The enzyme catalyses adenosine(1518)/adenosine(1519) in 16S rRNA + 4 S-adenosyl-L-methionine = N(6)-dimethyladenosine(1518)/N(6)-dimethyladenosine(1519) in 16S rRNA + 4 S-adenosyl-L-homocysteine + 4 H(+). Its function is as follows. Specifically dimethylates two adjacent adenosines (A1518 and A1519) in the loop of a conserved hairpin near the 3'-end of 16S rRNA in the 30S particle. May play a critical role in biogenesis of 30S subunits. This Alkaliphilus metalliredigens (strain QYMF) protein is Ribosomal RNA small subunit methyltransferase A.